The primary structure comprises 206 residues: Adenylate kinase (206 aa).

10–15 contacts ATP; that stretch reads GAGKGT. Residues 30 to 59 are NMP; the sequence is STGDMLRAAVAAGTPVGLKAKDIMASGGLV. AMP-binding positions include threonine 31, arginine 36, 57 to 59, 85 to 88, and glutamine 92; these read GLV and GFPR. An LID region spans residues 126-142; sequence NRVAETTARGEQVRADD. Arginine 127 contributes to the ATP binding site. Positions 139 and 150 each coordinate AMP. Methionine 178 is an ATP binding site.

It belongs to the adenylate kinase family. As to quaternary structure, monomer.

Its subcellular location is the cytoplasm. It carries out the reaction AMP + ATP = 2 ADP. It functions in the pathway purine metabolism; AMP biosynthesis via salvage pathway; AMP from ADP: step 1/1. Functionally, catalyzes the reversible transfer of the terminal phosphate group between ATP and AMP. Plays an important role in cellular energy homeostasis and in adenine nucleotide metabolism. The sequence is that of Adenylate kinase from Nitrobacter winogradskyi (strain ATCC 25391 / DSM 10237 / CIP 104748 / NCIMB 11846 / Nb-255).